Reading from the N-terminus, the 1296-residue chain is DNA-directed RNA polymerase subunit beta' (1296 aa).

Residues Cys60, Cys62, Cys75, and Cys78 each contribute to the Zn(2+) site. Over residues 185-202 (EEEGGKAAEKRKLRDSAD) the composition is skewed to basic and acidic residues. The interval 185–204 (EEEGGKAAEKRKLRDSADRQ) is disordered. Residues Asp535, Asp537, and Asp539 each coordinate Mg(2+). 4 residues coordinate Zn(2+): Cys877, Cys954, Cys961, and Cys964.

This sequence belongs to the RNA polymerase beta' chain family. In terms of assembly, the RNAP catalytic core consists of 2 alpha, 1 beta, 1 beta' and 1 omega subunit. When a sigma factor is associated with the core the holoenzyme is formed, which can initiate transcription. Mg(2+) serves as cofactor. It depends on Zn(2+) as a cofactor.

The enzyme catalyses RNA(n) + a ribonucleoside 5'-triphosphate = RNA(n+1) + diphosphate. Functionally, DNA-dependent RNA polymerase catalyzes the transcription of DNA into RNA using the four ribonucleoside triphosphates as substrates. This is DNA-directed RNA polymerase subunit beta' from Kocuria rhizophila (strain ATCC 9341 / DSM 348 / NBRC 103217 / DC2201).